The following is a 67-amino-acid chain: ATP synthase protein 8 (67 aa).

A helical transmembrane segment spans residues 8–24 (TWFITILATILTLFIIM). K54 is subject to N6-acetyllysine; alternate. Position 54 is an N6-succinyllysine; alternate (K54). K57 is modified (N6-acetyllysine).

Belongs to the ATPase protein 8 family. As to quaternary structure, F-type ATPases have 2 components, CF(1) - the catalytic core - and CF(0) - the membrane proton channel. Component of an ATP synthase complex composed of ATP5PB, ATP5MC1, ATP5F1E, ATP5PD, ATP5ME, ATP5PF, ATP5MF, MT-ATP6, MT-ATP8, ATP5F1A, ATP5F1B, ATP5F1D, ATP5F1C, ATP5PO, ATP5MG, ATP5MK and ATP5MJ. Interacts with PRICKLE3.

It is found in the mitochondrion membrane. In terms of biological role, mitochondrial membrane ATP synthase (F(1)F(0) ATP synthase or Complex V) produces ATP from ADP in the presence of a proton gradient across the membrane which is generated by electron transport complexes of the respiratory chain. F-type ATPases consist of two structural domains, F(1) - containing the extramembraneous catalytic core and F(0) - containing the membrane proton channel, linked together by a central stalk and a peripheral stalk. During catalysis, ATP synthesis in the catalytic domain of F(1) is coupled via a rotary mechanism of the central stalk subunits to proton translocation. Part of the complex F(0) domain. Minor subunit located with subunit a in the membrane. This is ATP synthase protein 8 (MT-ATP8) from Artibeus jamaicensis (Jamaican fruit-eating bat).